Here is a 286-residue protein sequence, read N- to C-terminus: ATP synthase gamma chain (286 aa).

This sequence belongs to the ATPase gamma chain family. F-type ATPases have 2 components, CF(1) - the catalytic core - and CF(0) - the membrane proton channel. CF(1) has five subunits: alpha(3), beta(3), gamma(1), delta(1), epsilon(1). CF(0) has three main subunits: a, b and c.

The protein resides in the cell membrane. Its function is as follows. Produces ATP from ADP in the presence of a proton gradient across the membrane. The gamma chain is believed to be important in regulating ATPase activity and the flow of protons through the CF(0) complex. This is ATP synthase gamma chain from Ruminococcus albus (strain ATCC 27210 / DSM 20455 / JCM 14654 / NCDO 2250 / 7).